Reading from the N-terminus, the 83-residue chain is Small ribosomal subunit protein bS18A (83 aa).

It belongs to the bacterial ribosomal protein bS18 family. As to quaternary structure, part of the 30S ribosomal subunit. Forms a tight heterodimer with protein bS6.

Functionally, binds as a heterodimer with protein bS6 to the central domain of the 16S rRNA, where it helps stabilize the platform of the 30S subunit. The polypeptide is Small ribosomal subunit protein bS18A (Mycolicibacterium vanbaalenii (strain DSM 7251 / JCM 13017 / BCRC 16820 / KCTC 9966 / NRRL B-24157 / PYR-1) (Mycobacterium vanbaalenii)).